The chain runs to 417 residues: Gamma-glutamyl phosphate reductase (417 aa).

Belongs to the gamma-glutamyl phosphate reductase family.

The protein localises to the cytoplasm. The enzyme catalyses L-glutamate 5-semialdehyde + phosphate + NADP(+) = L-glutamyl 5-phosphate + NADPH + H(+). The protein operates within amino-acid biosynthesis; L-proline biosynthesis; L-glutamate 5-semialdehyde from L-glutamate: step 2/2. Functionally, catalyzes the NADPH-dependent reduction of L-glutamate 5-phosphate into L-glutamate 5-semialdehyde and phosphate. The product spontaneously undergoes cyclization to form 1-pyrroline-5-carboxylate. The polypeptide is Gamma-glutamyl phosphate reductase (Meiothermus ruber).